The following is a 346-amino-acid chain: MSDRNPLIDADRRADEDNTLRPQTLDDFVGQAAARANLKVFIEAAKVRGEALDHVLFVGPPGLGKTTLAQIMAKELGVNFRSTSGPVIAKAGDLAALLTNLEERDVLFIDEIHRLSPAVEEILYPAMEDFQLDLIIGEGPAARSVKIDLAKFTLVAATTRLGLLTTPLRDRFGIPVRLNFYTVEELEYIVRRGARIMQMGISSDGAREVARRSRGTPRIVGRLLRRVRDFALVAGADIIDRRIADEALSRLEVDNRGLDQLDRRYLNIIARNFGGGPVGIETIAAGLSEPRDAIEDIIEPYLIQQGFLQRTPRGRVLTAVAWQHLGLPAPAEIIQQSQYGLFMEDE.

Residues 1–181 (MSDRNPLIDA…FGIPVRLNFY (181 aa)) form a large ATPase domain (RuvB-L) region. ATP-binding positions include leucine 20, arginine 21, glycine 62, lysine 65, threonine 66, threonine 67, 128 to 130 (EDF), arginine 171, tyrosine 181, and arginine 218. Threonine 66 is a binding site for Mg(2+). Residues 182 to 252 (TVEELEYIVR…IADEALSRLE (71 aa)) form a small ATPAse domain (RuvB-S) region. Residues 255–346 (NRGLDQLDRR…SQYGLFMEDE (92 aa)) are head domain (RuvB-H). The DNA site is built by arginine 291, arginine 310, and arginine 315.

Belongs to the RuvB family. As to quaternary structure, homohexamer. Forms an RuvA(8)-RuvB(12)-Holliday junction (HJ) complex. HJ DNA is sandwiched between 2 RuvA tetramers; dsDNA enters through RuvA and exits via RuvB. An RuvB hexamer assembles on each DNA strand where it exits the tetramer. Each RuvB hexamer is contacted by two RuvA subunits (via domain III) on 2 adjacent RuvB subunits; this complex drives branch migration. In the full resolvosome a probable DNA-RuvA(4)-RuvB(12)-RuvC(2) complex forms which resolves the HJ.

It localises to the cytoplasm. It catalyses the reaction ATP + H2O = ADP + phosphate + H(+). In terms of biological role, the RuvA-RuvB-RuvC complex processes Holliday junction (HJ) DNA during genetic recombination and DNA repair, while the RuvA-RuvB complex plays an important role in the rescue of blocked DNA replication forks via replication fork reversal (RFR). RuvA specifically binds to HJ cruciform DNA, conferring on it an open structure. The RuvB hexamer acts as an ATP-dependent pump, pulling dsDNA into and through the RuvAB complex. RuvB forms 2 homohexamers on either side of HJ DNA bound by 1 or 2 RuvA tetramers; 4 subunits per hexamer contact DNA at a time. Coordinated motions by a converter formed by DNA-disengaged RuvB subunits stimulates ATP hydrolysis and nucleotide exchange. Immobilization of the converter enables RuvB to convert the ATP-contained energy into a lever motion, pulling 2 nucleotides of DNA out of the RuvA tetramer per ATP hydrolyzed, thus driving DNA branch migration. The RuvB motors rotate together with the DNA substrate, which together with the progressing nucleotide cycle form the mechanistic basis for DNA recombination by continuous HJ branch migration. Branch migration allows RuvC to scan DNA until it finds its consensus sequence, where it cleaves and resolves cruciform DNA. The polypeptide is Holliday junction branch migration complex subunit RuvB (Brucella melitensis biotype 2 (strain ATCC 23457)).